The primary structure comprises 199 residues: Probable nicotinate-nucleotide adenylyltransferase (199 aa).

The protein belongs to the NadD family.

The catalysed reaction is nicotinate beta-D-ribonucleotide + ATP + H(+) = deamido-NAD(+) + diphosphate. It participates in cofactor biosynthesis; NAD(+) biosynthesis; deamido-NAD(+) from nicotinate D-ribonucleotide: step 1/1. In terms of biological role, catalyzes the reversible adenylation of nicotinate mononucleotide (NaMN) to nicotinic acid adenine dinucleotide (NaAD). The sequence is that of Probable nicotinate-nucleotide adenylyltransferase from Leptospira interrogans serogroup Icterohaemorrhagiae serovar copenhageni (strain Fiocruz L1-130).